The chain runs to 964 residues: MVDIVDKALRMGEGHQLKKLENVAKAVNALEDEISALSDEDLKAQTPKFKQEIENGKSLDEIMPEAFATVREVSKRTLGQRHFDVQLMGGAALHWGNIAEMKTGEGKTLVATLPTYLNALEGKGVHVVTVNDYLASYQSELMGRIYRFLGMNVGCIITEQKPPERRKQYNADITYGTNNEFGFDYLRDNMAWEKADLVQRGHHYAIVDEVDSILIDEARTPLIISGPAEGDVTRWYRQFAKLVLKLTRDEDYDVDEKKKVVGILDPGITKVEDFLGIDNLYEPANTALIGYLNNAIKAKELFLRDKDYVVTQGEVLIVDEHTGRILPGRRYNEGLHQAIEAKEGVEVKAENQTFATITLQNYFRMYDKLAGMTGTAETEAAEFMNTYKLGVLPIKTNKPMIRKDQDDLIYRTKKEKLAAIVKDVAKRHAEGQPVLLGTASVESSEVVSALLDVAKIPHQVLNAKQHEKEAAVVAVAGRKGAVTVATNMAGRGTDIMLGGNVEFLADAKLKSEGYSPEDTPEEYEKRWPGTLNEIKAQVKDEHEEVKELGGLYVLGTERHESRRIDNQLRGRSGRQGDPGESRFYLSLEDDLMRLFNTQLVAQVMARGMEEGQPIEAKSVTKGVRTAQKAVESRNYEIRKNVLKYDDVMNKQRTVIYSERQAVLKGEDIHKDILRFISDTVESYIKGANKGSEKPKDWDWEGLFKALNTVIPTKVDEDEVRKIVGGLKGAKAVEAVRDLIVEDARQQYGEMEETIGETGLRDLERRVVLAVLDRKWREHLYEMDYLKDGIGLRGMGQRDPLVEYQREGYQMYNSMIEAIKEETVQLLFHIDIKQVATTDDAVDEVEETAESADTIAVASGPDENGESVVEAAEGEVEEEDEDTDAKQAIAESAAASEAGESTLPVAGPAPVSHAEGKVPVSKRPKSEELKTPWADGRTFPGTGKNAPCPCGSGRKYKMCHGQNEA.

ATP contacts are provided by residues Gln86, Gly104 to Thr108, and Asp494. A disordered region spans residues Glu846–Ala964. The segment covering Ala871–Thr882 has biased composition (acidic residues). Positions Ala887–Ser900 are enriched in low complexity. Cys947, Cys949, Cys958, and His959 together coordinate Zn(2+).

This sequence belongs to the SecA family. Monomer and homodimer. Part of the essential Sec protein translocation apparatus which comprises SecA, SecYEG and auxiliary proteins SecDF. Other proteins may also be involved. Zn(2+) is required as a cofactor.

The protein localises to the cell membrane. It is found in the cytoplasm. The catalysed reaction is ATP + H2O + cellular proteinSide 1 = ADP + phosphate + cellular proteinSide 2.. In terms of biological role, part of the Sec protein translocase complex. Interacts with the SecYEG preprotein conducting channel. Has a central role in coupling the hydrolysis of ATP to the transfer of proteins into and across the cell membrane, serving as an ATP-driven molecular motor driving the stepwise translocation of polypeptide chains across the membrane. This is Protein translocase subunit SecA from Bifidobacterium longum subsp. infantis (strain ATCC 15697 / DSM 20088 / JCM 1222 / NCTC 11817 / S12).